A 224-amino-acid polypeptide reads, in one-letter code: E3 ubiquitin-protein ligase TRIM48 (224 aa).

An RING-type zinc finger spans residues Cys-31–Ile-72. The B box-type zinc finger occupies Ser-104–Ala-145. Cys-109, His-112, Cys-131, and His-137 together coordinate Zn(2+).

It belongs to the TRIM/RBCC family. In terms of assembly, interacts with PRMT1; the interaction leads to ubiquitination of PRMT1 by TRIM48. Interacts with MAP3K5. Interacts with STRAP.

Its subcellular location is the cytoplasm. The protein resides in the cytosol. It catalyses the reaction S-ubiquitinyl-[E2 ubiquitin-conjugating enzyme]-L-cysteine + [acceptor protein]-L-lysine = [E2 ubiquitin-conjugating enzyme]-L-cysteine + N(6)-ubiquitinyl-[acceptor protein]-L-lysine.. Its function is as follows. E3 ubiquitin-protein ligase which promotes K48-linked polyubiquitination of protein methyltransferase PRMT1, leading to PRMT1 degradation. This suppresses methylation of the PRMT1 substrate MAP3K5/ASK1, promoting its activation and increasing MAP3K5-dependent cell death induced by oxidative stress. TRIM48-mediated ubiquitination of PRMT1 also suppresses methylation of FOXO1 by PRMT1, leading to inhibition of FOXO1 transcriptional activity. The sequence is that of E3 ubiquitin-protein ligase TRIM48 from Homo sapiens (Human).